The chain runs to 57 residues: Potassium channel toxin alpha-KTx 23.3 (57 aa).

The signal sequence occupies residues 1–23 (MKMSIVIILLLFTCLIATNGASG). Cystine bridges form between Cys26–Cys46, Cys32–Cys51, Cys36–Cys53, and Cys41–Cys56.

It belongs to the short scorpion toxin superfamily. Potassium channel inhibitor family. Alpha-KTx 23 subfamily. Expressed by the venom gland.

It is found in the secreted. In terms of biological role, this toxin shows both immunosuppressive and anti-inflammatory activities. It has the potential to inhibit human T cell activation, since it reduces IL-2 secretion and the expression of T cell activation marker CD69 and acts as an anti-inflammatory agent, since it provokes the reduction of secretion of both IFN-gamma and TNF-alpha. In vivo, the delayed-type hypersensitivity response in rat autoimmune disease model is ameliorated in the presence of this toxin. Acts by blocking Kv1.3/KCNA3 potassium channels of T-lymphocytes. The sequence is that of Potassium channel toxin alpha-KTx 23.3 from Scorpiops tibetanus (Scorpion).